A 404-amino-acid chain; its full sequence is uncharacterized protein (404 aa).

12 helical membrane passes run 16–36 (FAFF…QPLM), 49–69 (AASL…LVFG), 79–99 (PIMG…AFSP), 110–130 (IQGV…GEEI), 133–153 (GSLG…AVFG), 166–186 (WHMA…IFFI), 221–241 (FLIG…IVYV), 252–272 (AFSS…SFIG), 283–303 (ILVM…NNML), 307–327 (ILGI…ASSW), 342–362 (LYLF…GLFW), and 364–384 (GFHW…ALWL).

This sequence belongs to the major facilitator superfamily.

It localises to the cell membrane. This is an uncharacterized protein from Bacillus subtilis (strain 168).